A 457-amino-acid chain; its full sequence is Mannose-6-phosphate isomerase (457 aa).

Residues Q108, H110, E135, and H292 each contribute to the Zn(2+) site. Residue R311 is part of the active site.

It belongs to the mannose-6-phosphate isomerase type 1 family. Zn(2+) serves as cofactor.

The protein localises to the cytoplasm. The catalysed reaction is D-mannose 6-phosphate = D-fructose 6-phosphate. It participates in nucleotide-sugar biosynthesis; GDP-alpha-D-mannose biosynthesis; alpha-D-mannose 1-phosphate from D-fructose 6-phosphate: step 1/2. In terms of biological role, involved in the synthesis of the GDP-mannose and dolichol-phosphate-mannose required for a number of critical mannosyl transfer reactions. The sequence is that of Mannose-6-phosphate isomerase (pmi1) from Aspergillus fumigatus (strain ATCC MYA-4609 / CBS 101355 / FGSC A1100 / Af293) (Neosartorya fumigata).